The primary structure comprises 219 residues: MSENQIKGILGTKLGMTQVFDEDNRVVPVTVVEAGPCVVTQIRTEEKDGYSAIQIAYGDIDPRKVNKPQSGHFAKAGVTPRRYVTEIRMDDVLSDYEVGQDVTVELFGDVKFVDVTGTTRGHGFAGAMKRHGFAGQGAAHGNQAAHRRVGGIGACATPGRVFKGTRMAGRMGNNRVTTQNLKLFKVDADSNLLLIKGAVPGIRGGLVTVKTAVKGGAHA.

Belongs to the universal ribosomal protein uL3 family. In terms of assembly, part of the 50S ribosomal subunit. Forms a cluster with proteins L14 and L19.

In terms of biological role, one of the primary rRNA binding proteins, it binds directly near the 3'-end of the 23S rRNA, where it nucleates assembly of the 50S subunit. This Corynebacterium kroppenstedtii (strain DSM 44385 / JCM 11950 / CIP 105744 / CCUG 35717) protein is Large ribosomal subunit protein uL3.